The chain runs to 215 residues: Large ribosomal subunit protein uL1 (215 aa).

Belongs to the universal ribosomal protein uL1 family. As to quaternary structure, part of the 50S ribosomal subunit.

Binds directly to 23S rRNA. Probably involved in E site tRNA release. In terms of biological role, protein L1 is also a translational repressor protein, it controls the translation of its operon by binding to its mRNA. This Cenarchaeum symbiosum (strain A) protein is Large ribosomal subunit protein uL1.